The chain runs to 94 residues: Integration host factor subunit beta (94 aa).

It belongs to the bacterial histone-like protein family. In terms of assembly, heterodimer of an alpha and a beta chain.

In terms of biological role, this protein is one of the two subunits of integration host factor, a specific DNA-binding protein that functions in genetic recombination as well as in transcriptional and translational control. The protein is Integration host factor subunit beta of Photorhabdus laumondii subsp. laumondii (strain DSM 15139 / CIP 105565 / TT01) (Photorhabdus luminescens subsp. laumondii).